The primary structure comprises 312 residues: MTEPTFPRRPQAIFLMGPTASGKTVLAMALHQHLPVEIISVDSALIYRGMDIGTAKPGADELARAPHRLIDIRDPAEAYSAADFRRDALKEMAEITEAGRIPLLVGGTMLYFKALLEGLSPLPSADPEVRARIEREAETVGWQALHRQLQQIDPIAANRIHPNDPQRLLRALEVFFVSGNTLTELTKISGEALAYRVHQFAIVPLDRALLHQRIAQRFHQMLAAGFEHEVSTLFARGDLHREMPSIRCVGYRQMWSYLADETDYDDMVFRGICATRQLAKRQMTWLRGWHDVHWLDSDEPAALDRVLQVVSA.

Residue 17–24 (GPTASGKT) participates in ATP binding. Residue 19–24 (TASGKT) participates in substrate binding. 3 interaction with substrate tRNA regions span residues 42–45 (DSAL), 166–170 (QRLLR), and 247–252 (RCVGYR).

Belongs to the IPP transferase family. As to quaternary structure, monomer. It depends on Mg(2+) as a cofactor.

The enzyme catalyses adenosine(37) in tRNA + dimethylallyl diphosphate = N(6)-dimethylallyladenosine(37) in tRNA + diphosphate. Catalyzes the transfer of a dimethylallyl group onto the adenine at position 37 in tRNAs that read codons beginning with uridine, leading to the formation of N6-(dimethylallyl)adenosine (i(6)A). The sequence is that of tRNA dimethylallyltransferase from Sodalis glossinidius (strain morsitans).